A 104-amino-acid polypeptide reads, in one-letter code: Integration host factor subunit alpha (104 aa).

The protein belongs to the bacterial histone-like protein family. As to quaternary structure, heterodimer of an alpha and a beta chain.

Its function is as follows. This protein is one of the two subunits of integration host factor, a specific DNA-binding protein that functions in genetic recombination as well as in transcriptional and translational control. The sequence is that of Integration host factor subunit alpha from Buchnera aphidicola subsp. Cinara cedri (strain Cc).